Here is a 338-residue protein sequence, read N- to C-terminus: Ketol-acid reductoisomerase (NADP(+)) (338 aa).

One can recognise a KARI N-terminal Rossmann domain in the interval M1 to T181. NADP(+) contacts are provided by residues Y24 to Q27, K47, S50, S52, and D82 to Q85. Residue H107 is part of the active site. Residue G133 participates in NADP(+) binding. Positions S182 to I327 constitute a KARI C-terminal knotted domain. Mg(2+)-binding residues include D190, E194, E226, and E230. S251 contributes to the substrate binding site.

Belongs to the ketol-acid reductoisomerase family. The cofactor is Mg(2+).

It catalyses the reaction (2R)-2,3-dihydroxy-3-methylbutanoate + NADP(+) = (2S)-2-acetolactate + NADPH + H(+). The catalysed reaction is (2R,3R)-2,3-dihydroxy-3-methylpentanoate + NADP(+) = (S)-2-ethyl-2-hydroxy-3-oxobutanoate + NADPH + H(+). It participates in amino-acid biosynthesis; L-isoleucine biosynthesis; L-isoleucine from 2-oxobutanoate: step 2/4. It functions in the pathway amino-acid biosynthesis; L-valine biosynthesis; L-valine from pyruvate: step 2/4. In terms of biological role, involved in the biosynthesis of branched-chain amino acids (BCAA). Catalyzes an alkyl-migration followed by a ketol-acid reduction of (S)-2-acetolactate (S2AL) to yield (R)-2,3-dihydroxy-isovalerate. In the isomerase reaction, S2AL is rearranged via a Mg-dependent methyl migration to produce 3-hydroxy-3-methyl-2-ketobutyrate (HMKB). In the reductase reaction, this 2-ketoacid undergoes a metal-dependent reduction by NADPH to yield (R)-2,3-dihydroxy-isovalerate. The protein is Ketol-acid reductoisomerase (NADP(+)) of Geotalea uraniireducens (strain Rf4) (Geobacter uraniireducens).